An 85-amino-acid polypeptide reads, in one-letter code: Small ribosomal subunit protein uS17 (85 aa).

Belongs to the universal ribosomal protein uS17 family. In terms of assembly, part of the 30S ribosomal subunit.

Functionally, one of the primary rRNA binding proteins, it binds specifically to the 5'-end of 16S ribosomal RNA. This is Small ribosomal subunit protein uS17 from Aggregatibacter actinomycetemcomitans (Actinobacillus actinomycetemcomitans).